An 84-amino-acid polypeptide reads, in one-letter code: Small ribosomal subunit protein bS16 (84 aa).

This sequence belongs to the bacterial ribosomal protein bS16 family.

The polypeptide is Small ribosomal subunit protein bS16 (Cupriavidus necator (strain ATCC 17699 / DSM 428 / KCTC 22496 / NCIMB 10442 / H16 / Stanier 337) (Ralstonia eutropha)).